Reading from the N-terminus, the 455-residue chain is F-box/LRR-repeat protein At5g35995 (455 aa).

In terms of domain architecture, F-box spans 4–51 (RDFISSLPDEVLGKKILSLLPTKLVVSTSVLSKRWRNLFHFVDSFDLE). 5 LRR repeats span residues 114–138 (DHYL…SYRT), 152–176 (FPAL…LISG), 282–305 (IRNV…CYTM), 308–324 (FDKL…ENGW), and 325–348 (QALP…LLHK).

This Arabidopsis thaliana (Mouse-ear cress) protein is F-box/LRR-repeat protein At5g35995.